A 62-amino-acid polypeptide reads, in one-letter code: Photosystem II reaction center protein Z (62 aa).

2 helical membrane passes run 8–28 (ALAA…VAYA) and 41–61 (FLGS…NFLV).

This sequence belongs to the PsbZ family. In terms of assembly, PSII is composed of 1 copy each of membrane proteins PsbA, PsbB, PsbC, PsbD, PsbE, PsbF, PsbH, PsbI, PsbJ, PsbK, PsbL, PsbM, PsbT, PsbX, PsbY, PsbZ, Psb30/Ycf12, peripheral proteins PsbO, CyanoQ (PsbQ), PsbU, PsbV and a large number of cofactors. It forms dimeric complexes.

Its subcellular location is the cellular thylakoid membrane. Functionally, may control the interaction of photosystem II (PSII) cores with the light-harvesting antenna, regulates electron flow through the 2 photosystem reaction centers. PSII is a light-driven water plastoquinone oxidoreductase, using light energy to abstract electrons from H(2)O, generating a proton gradient subsequently used for ATP formation. The sequence is that of Photosystem II reaction center protein Z from Cyanothece sp. (strain PCC 7425 / ATCC 29141).